Consider the following 36-residue polypeptide: Thrombin-like enzyme TLP (36 aa).

The Peptidase S1 domain maps to isoleucine 1–valine 36.

It belongs to the peptidase S1 family. Snake venom subfamily. In terms of assembly, monomer. Expressed by the venom gland.

The protein localises to the secreted. Functionally, thrombin-like snake venom serine protease. Shows strong hydrolytic activity towards Boc-Asp(oBzl)-Pro-Arg-MCA, a synthetic substrate for thrombin. The chain is Thrombin-like enzyme TLP from Naja naja (Indian cobra).